The primary structure comprises 365 residues: tRNA N6-adenosine threonylcarbamoyltransferase (365 aa).

The Fe cation site is built by His-119 and His-123. Residues 141–145, Asp-174, Gly-187, and Asn-289 each bind substrate; that span reads LVSGG. Asp-317 is a Fe cation binding site. Positions 341–365 are disordered; sequence SARPRWPLDKTSPALIGSGKKGAKA.

Belongs to the KAE1 / TsaD family. It depends on Fe(2+) as a cofactor.

Its subcellular location is the cytoplasm. It catalyses the reaction L-threonylcarbamoyladenylate + adenosine(37) in tRNA = N(6)-L-threonylcarbamoyladenosine(37) in tRNA + AMP + H(+). Required for the formation of a threonylcarbamoyl group on adenosine at position 37 (t(6)A37) in tRNAs that read codons beginning with adenine. Is involved in the transfer of the threonylcarbamoyl moiety of threonylcarbamoyl-AMP (TC-AMP) to the N6 group of A37, together with TsaE and TsaB. TsaD likely plays a direct catalytic role in this reaction. This is tRNA N6-adenosine threonylcarbamoyltransferase from Ruegeria sp. (strain TM1040) (Silicibacter sp.).